A 125-amino-acid polypeptide reads, in one-letter code: S-adenosylmethionine decarboxylase proenzyme (125 aa).

Residue serine 71 is the Schiff-base intermediate with substrate; via pyruvic acid of the active site. Serine 71 carries the pyruvic acid (Ser); by autocatalysis modification. Histidine 76 (proton acceptor; for processing activity) is an active-site residue. Residue cysteine 91 is the Proton donor; for catalytic activity of the active site.

It belongs to the prokaryotic AdoMetDC family. Type 1 subfamily. As to quaternary structure, heterotetramer of two alpha and two beta chains arranged as a dimer of alpha/beta heterodimers. Requires pyruvate as cofactor. Post-translationally, is synthesized initially as an inactive proenzyme. Formation of the active enzyme involves a self-maturation process in which the active site pyruvoyl group is generated from an internal serine residue via an autocatalytic post-translational modification. Two non-identical subunits are generated from the proenzyme in this reaction, and the pyruvate is formed at the N-terminus of the alpha chain, which is derived from the carboxyl end of the proenzyme. The post-translation cleavage follows an unusual pathway, termed non-hydrolytic serinolysis, in which the side chain hydroxyl group of the serine supplies its oxygen atom to form the C-terminus of the beta chain, while the remainder of the serine residue undergoes an oxidative deamination to produce ammonia and the pyruvoyl group blocking the N-terminus of the alpha chain.

It catalyses the reaction S-adenosyl-L-methionine + H(+) = S-adenosyl 3-(methylsulfanyl)propylamine + CO2. It participates in amine and polyamine biosynthesis; S-adenosylmethioninamine biosynthesis; S-adenosylmethioninamine from S-adenosyl-L-methionine: step 1/1. Its function is as follows. Catalyzes the decarboxylation of S-adenosylmethionine to S-adenosylmethioninamine (dcAdoMet), the propylamine donor required for the synthesis of the polyamines spermine and spermidine from the diamine putrescine. In Pyrobaculum aerophilum (strain ATCC 51768 / DSM 7523 / JCM 9630 / CIP 104966 / NBRC 100827 / IM2), this protein is S-adenosylmethionine decarboxylase proenzyme.